A 285-amino-acid polypeptide reads, in one-letter code: Small ribosomal subunit biogenesis GTPase RsgA (285 aa).

Residues 61–215 (KNQLIRPKVA…IIDSPGFSSF (155 aa)) form the CP-type G domain. GTP is bound by residues 110 to 113 (TKID) and 159 to 167 (GQTGVGKTS). The Zn(2+) site is built by Cys239, Cys244, His246, and Cys254.

It belongs to the TRAFAC class YlqF/YawG GTPase family. RsgA subfamily. Monomer. Associates with 30S ribosomal subunit, binds 16S rRNA. The cofactor is Zn(2+).

The protein localises to the cytoplasm. In terms of biological role, one of several proteins that assist in the late maturation steps of the functional core of the 30S ribosomal subunit. Helps release RbfA from mature subunits. May play a role in the assembly of ribosomal proteins into the subunit. Circularly permuted GTPase that catalyzes slow GTP hydrolysis, GTPase activity is stimulated by the 30S ribosomal subunit. The chain is Small ribosomal subunit biogenesis GTPase RsgA from Mesomycoplasma hyopneumoniae (strain J / ATCC 25934 / NCTC 10110) (Mycoplasma hyopneumoniae).